The chain runs to 327 residues: L-lactate dehydrogenase (327 aa).

NAD(+) contacts are provided by residues Val-18, Asp-39, Arg-44, Tyr-69, and 83–84 (GL). Substrate-binding positions include Gln-86, Arg-92, and 124–127 (NPVD). NAD(+) is bound by residues 122-124 (AAN) and Ser-147. 152-155 (DSAR) serves as a coordination point for substrate. Beta-D-fructose 1,6-bisphosphate is bound by residues Arg-157 and His-172. The Proton acceptor role is filled by His-179. Tyr-224 carries the phosphotyrosine modification. Thr-233 is a binding site for substrate.

It belongs to the LDH/MDH superfamily. LDH family. Homotetramer.

It localises to the cytoplasm. It carries out the reaction (S)-lactate + NAD(+) = pyruvate + NADH + H(+). It functions in the pathway fermentation; pyruvate fermentation to lactate; (S)-lactate from pyruvate: step 1/1. Allosterically activated by fructose 1,6-bisphosphate (FBP). In terms of biological role, catalyzes the conversion of lactate to pyruvate. This chain is L-lactate dehydrogenase, found in Streptococcus suis (strain 98HAH33).